The primary structure comprises 437 residues: GTPase Obg (437 aa).

The region spanning 2–161 (SDFIDRALIT…RELQLELKVI (160 aa)) is the Obg domain. An OBG-type G domain is found at 162–335 (ADVGLVGFPN…LQRRIVDILR (174 aa)). GTP contacts are provided by residues 168–175 (GFPNAGKS), 193–197 (FTTLS), 214–217 (DIPG), 284–287 (NKTD), and 316–318 (SAA). 2 residues coordinate Mg(2+): Ser175 and Thr195. Positions 355 to 433 (FSNIDPNDFW…IEKAELLWQD (79 aa)) constitute an OCT domain.

The protein belongs to the TRAFAC class OBG-HflX-like GTPase superfamily. OBG GTPase family. In terms of assembly, monomer. Mg(2+) serves as cofactor.

It localises to the cytoplasm. Its function is as follows. An essential GTPase which binds GTP, GDP and possibly (p)ppGpp with moderate affinity, with high nucleotide exchange rates and a fairly low GTP hydrolysis rate. Plays a role in control of the cell cycle, stress response, ribosome biogenesis and in those bacteria that undergo differentiation, in morphogenesis control. The polypeptide is GTPase Obg (Herpetosiphon aurantiacus (strain ATCC 23779 / DSM 785 / 114-95)).